The primary structure comprises 357 residues: Nicotinate-nucleotide--dimethylbenzimidazole phosphoribosyltransferase (357 aa).

The active-site Proton acceptor is Glu323.

Belongs to the CobT family.

The enzyme catalyses 5,6-dimethylbenzimidazole + nicotinate beta-D-ribonucleotide = alpha-ribazole 5'-phosphate + nicotinate + H(+). It participates in nucleoside biosynthesis; alpha-ribazole biosynthesis; alpha-ribazole from 5,6-dimethylbenzimidazole: step 1/2. Its function is as follows. Catalyzes the synthesis of alpha-ribazole-5'-phosphate from nicotinate mononucleotide (NAMN) and 5,6-dimethylbenzimidazole (DMB). The protein is Nicotinate-nucleotide--dimethylbenzimidazole phosphoribosyltransferase of Nitratidesulfovibrio vulgaris (strain ATCC 29579 / DSM 644 / CCUG 34227 / NCIMB 8303 / VKM B-1760 / Hildenborough) (Desulfovibrio vulgaris).